Here is a 611-residue protein sequence, read N- to C-terminus: O-fucosyltransferase 8 (611 aa).

The tract at residues 1 to 29 (MGKQGSPRSPRPETIDKEEKFGRRSLDSL) is disordered. Over residues 10 to 26 (PRPETIDKEEKFGRRSL) the composition is skewed to basic and acidic residues. The helical; Signal-anchor for type II membrane protein transmembrane segment at 78–98 (IVLMISVTGFIFCMDSIMVSI) threads the bilayer. 3 N-linked (GlcNAc...) asparagine glycosylation sites follow: N115, N216, and N270. 386-388 (HLR) provides a ligand contact to substrate. N506 carries an N-linked (GlcNAc...) asparagine glycan.

This sequence belongs to the glycosyltransferase GT106 family.

The protein resides in the membrane. Its pathway is glycan metabolism. This Arabidopsis thaliana (Mouse-ear cress) protein is O-fucosyltransferase 8.